The primary structure comprises 348 residues: Dihydroorotase (348 aa).

The Zn(2+) site is built by His-17 and His-19. Substrate-binding positions include 19-21 (HLR) and Asn-45. Residues Lys-103, His-140, and His-178 each coordinate Zn(2+). Lys-103 is subject to N6-carboxylysine. His-140 is a binding site for substrate. Leu-223 contributes to the substrate binding site. A Zn(2+)-binding site is contributed by Asp-251. Asp-251 is an active-site residue. His-255 and Ala-267 together coordinate substrate.

It belongs to the metallo-dependent hydrolases superfamily. DHOase family. Class II DHOase subfamily. As to quaternary structure, homodimer. Requires Zn(2+) as cofactor.

It carries out the reaction (S)-dihydroorotate + H2O = N-carbamoyl-L-aspartate + H(+). Its pathway is pyrimidine metabolism; UMP biosynthesis via de novo pathway; (S)-dihydroorotate from bicarbonate: step 3/3. In terms of biological role, catalyzes the reversible cyclization of carbamoyl aspartate to dihydroorotate. The sequence is that of Dihydroorotase from Yersinia pseudotuberculosis serotype O:1b (strain IP 31758).